The following is a 208-amino-acid chain: V-type ATP synthase subunit D (208 aa).

It belongs to the V-ATPase D subunit family.

Functionally, produces ATP from ADP in the presence of a proton gradient across the membrane. The chain is V-type ATP synthase subunit D from Chlamydia felis (strain Fe/C-56) (Chlamydophila felis).